The following is a 251-amino-acid chain: NADPH-dependent oxidoreductase (251 aa).

This sequence belongs to the flavin oxidoreductase frp family. Requires FMN as cofactor.

Reduces FMN, organic nitro compounds and disulfide DTNB. Involved in maintenance of the cellular redox state and the disulfide stress response. This Staphylococcus saprophyticus subsp. saprophyticus (strain ATCC 15305 / DSM 20229 / NCIMB 8711 / NCTC 7292 / S-41) protein is NADPH-dependent oxidoreductase (nfrA).